The sequence spans 534 residues: Neryl diphosphate diphosphatase, chloroplastic (534 aa).

Mg(2+)-binding residues include Asp-272, Asp-276, Asp-416, and Glu-424. The DDXXD motif signature appears at 272–276 (DDIFD).

It belongs to the terpene synthase family. It depends on Mg(2+) as a cofactor.

The protein localises to the plastid. Its subcellular location is the chloroplast. The enzyme catalyses neryl diphosphate + H2O = nerol + diphosphate. It participates in secondary metabolite biosynthesis; terpenoid biosynthesis. In terms of biological role, monoterpene synthase that catalyzes the hydrolysis of neryl diphosphate (NPP) to form nerol and diphosphate. Is specific for NPP and has no hydrolase activity toward geranyl diphosphate (GPP) or farnesyl diphosphate (FPP). The monoterpene nerol may have an insect repellent effect for the plant leaves. This chain is Neryl diphosphate diphosphatase, chloroplastic, found in Glycine max (Soybean).